The chain runs to 485 residues: Bifunctional protein GlmU (485 aa).

A pyrophosphorylase region spans residues 1-241; sequence MSASDFSSAV…ARELAGVNDR (241 aa). UDP-N-acetyl-alpha-D-glucosamine-binding positions include 13 to 16, K27, Q84, and 89 to 90; these read LAAG and GT. D114 provides a ligand contact to Mg(2+). UDP-N-acetyl-alpha-D-glucosamine-binding residues include G151, E166, N181, and N239. N239 lines the Mg(2+) pocket. The tract at residues 242-262 is linker; that stretch reads VQLAEAGAELNRRTVIAAMRG. The N-acetyltransferase stretch occupies residues 263–485; the sequence is GATIVDPATT…AAQNVHNQEG (223 aa). Residues R344 and K362 each contribute to the UDP-N-acetyl-alpha-D-glucosamine site. H374 acts as the Proton acceptor in catalysis. 2 residues coordinate UDP-N-acetyl-alpha-D-glucosamine: Y377 and N388. Acetyl-CoA is bound by residues A391, 397–398, S416, and A434; that span reads NY. Residues 465–485 are disordered; that stretch reads RPGTAAAQAAEAAQNVHNQEG. A compositionally biased stretch (low complexity) spans 469 to 478; sequence AAAQAAEAAQ.

In the N-terminal section; belongs to the N-acetylglucosamine-1-phosphate uridyltransferase family. This sequence in the C-terminal section; belongs to the transferase hexapeptide repeat family. In terms of assembly, homotrimer. Requires Mg(2+) as cofactor.

It is found in the cytoplasm. It carries out the reaction alpha-D-glucosamine 1-phosphate + acetyl-CoA = N-acetyl-alpha-D-glucosamine 1-phosphate + CoA + H(+). The enzyme catalyses N-acetyl-alpha-D-glucosamine 1-phosphate + UTP + H(+) = UDP-N-acetyl-alpha-D-glucosamine + diphosphate. The protein operates within nucleotide-sugar biosynthesis; UDP-N-acetyl-alpha-D-glucosamine biosynthesis; N-acetyl-alpha-D-glucosamine 1-phosphate from alpha-D-glucosamine 6-phosphate (route II): step 2/2. It functions in the pathway nucleotide-sugar biosynthesis; UDP-N-acetyl-alpha-D-glucosamine biosynthesis; UDP-N-acetyl-alpha-D-glucosamine from N-acetyl-alpha-D-glucosamine 1-phosphate: step 1/1. It participates in bacterial outer membrane biogenesis; LPS lipid A biosynthesis. Catalyzes the last two sequential reactions in the de novo biosynthetic pathway for UDP-N-acetylglucosamine (UDP-GlcNAc). The C-terminal domain catalyzes the transfer of acetyl group from acetyl coenzyme A to glucosamine-1-phosphate (GlcN-1-P) to produce N-acetylglucosamine-1-phosphate (GlcNAc-1-P), which is converted into UDP-GlcNAc by the transfer of uridine 5-monophosphate (from uridine 5-triphosphate), a reaction catalyzed by the N-terminal domain. This Corynebacterium glutamicum (strain R) protein is Bifunctional protein GlmU.